Consider the following 212-residue polypeptide: Redox-sensing transcriptional repressor Rex (212 aa).

Positions 17 to 56 form a DNA-binding region, H-T-H motif; sequence KYHRYLQELMENDVDRISSKELSEKIGFTASQIRQDLNCF. Residue 91–96 coordinates NAD(+); that stretch reads GAGNIG.

Belongs to the transcriptional regulatory Rex family. In terms of assembly, homodimer.

Its subcellular location is the cytoplasm. Functionally, modulates transcription in response to changes in cellular NADH/NAD(+) redox state. The chain is Redox-sensing transcriptional repressor Rex from Clostridium perfringens (strain ATCC 13124 / DSM 756 / JCM 1290 / NCIMB 6125 / NCTC 8237 / Type A).